The primary structure comprises 246 residues: Osmotin-like protein OSML13 (246 aa).

The first 21 residues, 1-21 (MAYLRSSFVFFLLAFVTYTYA), serve as a signal peptide directing secretion. 8 cysteine pairs are disulfide-bonded: cysteine 30–cysteine 225, cysteine 72–cysteine 82, cysteine 87–cysteine 93, cysteine 141–cysteine 213, cysteine 146–cysteine 196, cysteine 154–cysteine 164, cysteine 168–cysteine 177, and cysteine 178–cysteine 183.

It belongs to the thaumatin family.

This Solanum commersonii (Commerson's wild potato) protein is Osmotin-like protein OSML13.